The primary structure comprises 325 residues: ATP synthase gamma chain (325 aa).

It belongs to the ATPase gamma chain family. F-type ATPases have 2 components, CF(1) - the catalytic core - and CF(0) - the membrane proton channel. CF(1) has five subunits: alpha(3), beta(3), gamma(1), delta(1), epsilon(1). CF(0) has three main subunits: a, b and c.

It localises to the cell membrane. Produces ATP from ADP in the presence of a proton gradient across the membrane. The gamma chain is believed to be important in regulating ATPase activity and the flow of protons through the CF(0) complex. The chain is ATP synthase gamma chain from Corynebacterium urealyticum (strain ATCC 43042 / DSM 7109).